The chain runs to 125 residues: Classical arabinogalactan protein 27 (125 aa).

The first 21 residues, 1 to 21, serve as a signal peptide directing secretion; it reads MASSILLTLITFIFLSSLSLS. Positions 20–36 are enriched in low complexity; it reads LSSPTTNTIPSSQTISP. The disordered stretch occupies residues 20-95; that stretch reads LSSPTTNTIP…ASPPASSLAS (76 aa). Over residues 53-66 the composition is skewed to polar residues; sequence AVSSTQTIPSSSTL. Residues 77-95 are compositionally biased toward low complexity; it reads DPDPAFAPSASPPASSLAS. The GPI-anchor amidated serine moiety is linked to residue serine 98. A propeptide spans 99–125 (removed in mature form); the sequence is QAPGVFIYFVFAAVYCFSLRLLAVSAI.

This sequence belongs to the classical AGP family. O-glycosylated on the hydroxyproline residues.

It localises to the cell membrane. Proteoglycan that seems to be implicated in diverse developmental roles such as differentiation, cell-cell recognition, embryogenesis and programmed cell death. The polypeptide is Classical arabinogalactan protein 27 (AGP27) (Arabidopsis thaliana (Mouse-ear cress)).